The chain runs to 309 residues: Olfactory receptor 8A1 (309 aa).

Topologically, residues 1–28 (MTAENQSTVTEFILGGLTNRPELQLPLF) are extracellular. Residues 29 to 49 (LLFLGIYVVTMVGNLGMITLI) traverse the membrane as a helical segment. The Cytoplasmic segment spans residues 50–56 (GLNSQLH). Residues 57–77 (TPMYFFLSNLSLVDLCYSSVI) traverse the membrane as a helical segment. Over 78–90 (TPKMLINFVSQRN) the chain is Extracellular. Residues 91–111 (LISYVGCMSQLYFFLVFVIAE) form a helical membrane-spanning segment. A disulfide bridge connects residues cysteine 97 and cysteine 188. The Cytoplasmic portion of the chain corresponds to 112-133 (CYMLTVMAYDRYVAICQPLLYN). A helical transmembrane segment spans residues 134–154 (IIMSPALCSLLVAFVYAVGLI). Residues 155-195 (GSAIETGLMLKLNYCEDLISHYFCDILPLMKLSCSSTYDVE) are Extracellular-facing. A helical transmembrane segment spans residues 196–216 (MAVFFLAGFDIIVTSLTVLIS). Over 217–238 (YAFILSSILRISSNEGRSKAFS) the chain is Cytoplasmic. A helical membrane pass occupies residues 239–259 (TCSSHFAAVGLFYGSTAFMYL). Residues 260–270 (KPSTASSLAQE) lie on the Extracellular side of the membrane. A helical membrane pass occupies residues 271-291 (NVASVFYTTVIPMFNPLIYSL). Residues 292 to 309 (RNKEVKTALDKTLRRKVF) are Cytoplasmic-facing.

It belongs to the G-protein coupled receptor 1 family.

The protein resides in the cell membrane. In terms of biological role, odorant receptor. In Mus musculus (Mouse), this protein is Olfactory receptor 8A1.